The primary structure comprises 322 residues: tRNA-modifying protein YgfZ (322 aa).

Residue Trp-182 participates in folate binding.

Belongs to the tRNA-modifying YgfZ family.

The protein resides in the cytoplasm. Functionally, folate-binding protein involved in regulating the level of ATP-DnaA and in the modification of some tRNAs. It is probably a key factor in regulatory networks that act via tRNA modification, such as initiation of chromosomal replication. This chain is tRNA-modifying protein YgfZ, found in Vibrio parahaemolyticus serotype O3:K6 (strain RIMD 2210633).